Reading from the N-terminus, the 311-residue chain is Coproporphyrin III ferrochelatase 1 (311 aa).

Fe-coproporphyrin III contacts are provided by residues tyrosine 12, arginine 29, arginine 45 to tyrosine 46, serine 53, and tyrosine 124. 2 residues coordinate Fe(2+): histidine 182 and glutamate 263.

The protein belongs to the ferrochelatase family.

It is found in the cytoplasm. The enzyme catalyses Fe-coproporphyrin III + 2 H(+) = coproporphyrin III + Fe(2+). It functions in the pathway porphyrin-containing compound metabolism; protoheme biosynthesis. Involved in coproporphyrin-dependent heme b biosynthesis. Catalyzes the insertion of ferrous iron into coproporphyrin III to form Fe-coproporphyrin III. In Bacillus anthracis, this protein is Coproporphyrin III ferrochelatase 1.